The sequence spans 303 residues: MRVFSSIDELRHTLDALRRQGRTVGLVPTMGYLHAGHMELVSRARAENDIVVVSIFVNPLQFGPAEDLSKYPRDLERDAAMLRQAGVNFLFSPGVEDMYSRPMLTVVDVPDLGRELEGAVRPGHFAGVATVVCKLFNIVQPQTAYFGAKDYQQVVIIKRMVDDLALPVRLISVPTVRDSDGLALSSRNVYLSEAERRAAVIVPQTLDEAERLVADGLTDPVELEARLTAFLSREPLAKPEVVAVRDAATLQPVTSIADPVVVALFVRVGSTRLLDNRVVGSNRFVGNNRVAGGQSLPGKGVTR.

30 to 37 (MGYLHAGH) lines the ATP pocket. The active-site Proton donor is the His-37. Gln-61 is a (R)-pantoate binding site. Gln-61 is a binding site for beta-alanine. 147–150 (GAKD) is a binding site for ATP. Gln-153 lines the (R)-pantoate pocket. Residues Val-176 and 184–187 (LSSR) each bind ATP.

It belongs to the pantothenate synthetase family. In terms of assembly, homodimer.

The protein resides in the cytoplasm. The catalysed reaction is (R)-pantoate + beta-alanine + ATP = (R)-pantothenate + AMP + diphosphate + H(+). The protein operates within cofactor biosynthesis; (R)-pantothenate biosynthesis; (R)-pantothenate from (R)-pantoate and beta-alanine: step 1/1. Its function is as follows. Catalyzes the condensation of pantoate with beta-alanine in an ATP-dependent reaction via a pantoyl-adenylate intermediate. This is Pantothenate synthetase from Rhizobium johnstonii (strain DSM 114642 / LMG 32736 / 3841) (Rhizobium leguminosarum bv. viciae).